Consider the following 571-residue polypeptide: Proline--tRNA ligase (571 aa).

It belongs to the class-II aminoacyl-tRNA synthetase family. ProS type 1 subfamily. Homodimer.

The protein resides in the cytoplasm. The catalysed reaction is tRNA(Pro) + L-proline + ATP = L-prolyl-tRNA(Pro) + AMP + diphosphate. Catalyzes the attachment of proline to tRNA(Pro) in a two-step reaction: proline is first activated by ATP to form Pro-AMP and then transferred to the acceptor end of tRNA(Pro). As ProRS can inadvertently accommodate and process non-cognate amino acids such as alanine and cysteine, to avoid such errors it has two additional distinct editing activities against alanine. One activity is designated as 'pretransfer' editing and involves the tRNA(Pro)-independent hydrolysis of activated Ala-AMP. The other activity is designated 'posttransfer' editing and involves deacylation of mischarged Ala-tRNA(Pro). The misacylated Cys-tRNA(Pro) is not edited by ProRS. The polypeptide is Proline--tRNA ligase (Pediococcus pentosaceus (strain ATCC 25745 / CCUG 21536 / LMG 10740 / 183-1w)).